The primary structure comprises 344 residues: UDP-N-acetylglucosamine--N-acetylmuramyl-(pentapeptide) pyrophosphoryl-undecaprenol N-acetylglucosamine transferase (344 aa).

Residues 9–11 (TGG), N118, R157, S188, and Q282 contribute to the UDP-N-acetyl-alpha-D-glucosamine site.

It belongs to the glycosyltransferase 28 family. MurG subfamily.

The protein localises to the cell inner membrane. It catalyses the reaction di-trans,octa-cis-undecaprenyl diphospho-N-acetyl-alpha-D-muramoyl-L-alanyl-D-glutamyl-meso-2,6-diaminopimeloyl-D-alanyl-D-alanine + UDP-N-acetyl-alpha-D-glucosamine = di-trans,octa-cis-undecaprenyl diphospho-[N-acetyl-alpha-D-glucosaminyl-(1-&gt;4)]-N-acetyl-alpha-D-muramoyl-L-alanyl-D-glutamyl-meso-2,6-diaminopimeloyl-D-alanyl-D-alanine + UDP + H(+). The protein operates within cell wall biogenesis; peptidoglycan biosynthesis. In terms of biological role, cell wall formation. Catalyzes the transfer of a GlcNAc subunit on undecaprenyl-pyrophosphoryl-MurNAc-pentapeptide (lipid intermediate I) to form undecaprenyl-pyrophosphoryl-MurNAc-(pentapeptide)GlcNAc (lipid intermediate II). The polypeptide is UDP-N-acetylglucosamine--N-acetylmuramyl-(pentapeptide) pyrophosphoryl-undecaprenol N-acetylglucosamine transferase (Aquifex aeolicus (strain VF5)).